The following is a 487-amino-acid chain: ATP synthase subunit beta (487 aa).

Gly164–Thr171 contributes to the ATP binding site.

The protein belongs to the ATPase alpha/beta chains family. As to quaternary structure, F-type ATPases have 2 components, CF(1) - the catalytic core - and CF(0) - the membrane proton channel. CF(1) has five subunits: alpha(3), beta(3), gamma(1), delta(1), epsilon(1). CF(0) has four main subunits: a(1), b(1), b'(1) and c(9-12).

Its subcellular location is the cellular thylakoid membrane. The enzyme catalyses ATP + H2O + 4 H(+)(in) = ADP + phosphate + 5 H(+)(out). In terms of biological role, produces ATP from ADP in the presence of a proton gradient across the membrane. The catalytic sites are hosted primarily by the beta subunits. The polypeptide is ATP synthase subunit beta (Synechococcus sp. (strain CC9311)).